The primary structure comprises 241 residues: DNA protection during starvation protein 2 (241 aa).

The interval 25 to 65 (GAQSAGNGVPSTNVNTPAPNTGQSTAQNTNTASPLPYNRAT) is disordered. Residues 33 to 57 (VPSTNVNTPAPNTGQSTAQNTNTAS) are compositionally biased toward polar residues. Fe cation is bound by residues histidine 100, aspartate 127, and glutamate 131. A compositionally biased stretch (polar residues) spans 220–229 (TPTDPNTGFD). The disordered stretch occupies residues 220–241 (TPTDPNTGFDINNGKPVPLRGR).

This sequence belongs to the Dps family. As to quaternary structure, homododecamer. The 12 subunits form a hollow sphere into which the mineral iron core of up to 500 Fe(3+) can be deposited.

The protein resides in the cytoplasm. The catalysed reaction is 2 Fe(2+) + H2O2 + 2 H(+) = 2 Fe(3+) + 2 H2O. In terms of biological role, protects DNA from oxidative damage by sequestering intracellular Fe(2+) ion and storing it in the form of Fe(3+) oxyhydroxide mineral. One hydrogen peroxide oxidizes two Fe(2+) ions, which prevents hydroxyl radical production by the Fenton reaction. This Deinococcus radiodurans (strain ATCC 13939 / DSM 20539 / JCM 16871 / CCUG 27074 / LMG 4051 / NBRC 15346 / NCIMB 9279 / VKM B-1422 / R1) protein is DNA protection during starvation protein 2 (dps2).